A 122-amino-acid chain; its full sequence is Large ribosomal subunit protein uL14c (122 aa).

The protein belongs to the universal ribosomal protein uL14 family. In terms of assembly, part of the 50S ribosomal subunit.

Its subcellular location is the plastid. The protein resides in the chloroplast. Functionally, binds to 23S rRNA. In Bigelowiella natans (Pedinomonas minutissima), this protein is Large ribosomal subunit protein uL14c (rpl14).